The primary structure comprises 340 residues: MDRTRIVRRWRRNMDVADDAEYVEMLATLSEGSVRRNFNPYTDIDWESPEFAVTDNDPRWILPATDPLGRHPWYQAQSRERQIEIGMWRQANVAKVGLHFESILIRGLMNYTFWMPNGSPEYRYCLHESVEECNHTMMFQEMVNRVGADVPGLPRRLRWVSPLVPLVAGPLPVAFFIGVLAGEEPIDHTQKNVLREGKSLHPIMERVMSIHVAEEARHISFAHEYLRKRLPRLTRMQRFWISLYFPLTMRSLCNAIVVPPKAFWEEFDIPREVKKELFFGSPESRKWLCDMFADARMLAHDTGLMNPIARLVWRLCKIDGKPSRYRSEPQRQHLAAAPAA.

The next 2 membrane-spanning stretches (helical) occupy residues 162–182 and 239–259; these read PLVP…VLAG and FWIS…IVVP.

It localises to the cell membrane. This is an uncharacterized protein from Mycobacterium bovis (strain ATCC BAA-935 / AF2122/97).